The sequence spans 183 residues: Ribosome-recycling factor (183 aa).

This sequence belongs to the RRF family.

The protein localises to the cytoplasm. Functionally, responsible for the release of ribosomes from messenger RNA at the termination of protein biosynthesis. May increase the efficiency of translation by recycling ribosomes from one round of translation to another. The polypeptide is Ribosome-recycling factor (Ureaplasma urealyticum serovar 10 (strain ATCC 33699 / Western)).